The chain runs to 620 residues: MSLDIKKYPTLVLADNPMELRQLPKESLVALCDELRQFLLDSVSRSSGHFASGLGTVELTVALHYVYNTPFDRLIWDVGHQAYPHKILTGRRDRIATIRQRNGLHPFPWRGESEYDQLSVGHSSTSISAGLGMAVAAEHEGLGRRTVCVIGDGAITAGMAFEAMNHAGDIKSDLLVVLNDNEMSISENVGALNNHLAQILSGKLYSTLREGGKKVLSGIPPIKELVKRTEEHIKGMVVPGTLFEELGFNYIGPVDGHDVQGLVQTLKNMRAKKGPQLLHIMTKKGRGYAPAEKDPISWHAVPKFDPHMGTLPKSGDGCPTYSAIFGDWLCATAADDDKLMAITPAMREGSGMVAFSRQYPRQYFDVAIAEQHAVTFAAGLAIGGYHPVVAIYSTFLQRAYDQVIHDVAIQNLPVLFAIDRGGVVGADGQTHQGAFDLSYLRCIPNMVIMTPSDENECRLMLHTGYHYQAGPSTVRYPRGNSTGAPLTDLHELPLGKGVVHRQGAGVAILNFGTLLPQAEHAAQAINATLVDMRFVKPLDDTLISELAASHQALVTVEENAIMGGAGSGVNEYVMQQRLQVPVLNIGLPDHFIPQGSQEEIRADLGLDGAGIQRQIKDWLA.

Thiamine diphosphate contacts are provided by residues His-80 and 121 to 123 (GHS). Asp-152 contributes to the Mg(2+) binding site. Thiamine diphosphate-binding positions include 153-154 (GA), Asn-181, Tyr-288, and Glu-370. Asn-181 lines the Mg(2+) pocket.

This sequence belongs to the transketolase family. DXPS subfamily. As to quaternary structure, homodimer. It depends on Mg(2+) as a cofactor. The cofactor is thiamine diphosphate.

The catalysed reaction is D-glyceraldehyde 3-phosphate + pyruvate + H(+) = 1-deoxy-D-xylulose 5-phosphate + CO2. It participates in metabolic intermediate biosynthesis; 1-deoxy-D-xylulose 5-phosphate biosynthesis; 1-deoxy-D-xylulose 5-phosphate from D-glyceraldehyde 3-phosphate and pyruvate: step 1/1. Catalyzes the acyloin condensation reaction between C atoms 2 and 3 of pyruvate and glyceraldehyde 3-phosphate to yield 1-deoxy-D-xylulose-5-phosphate (DXP). In Sodalis glossinidius (strain morsitans), this protein is 1-deoxy-D-xylulose-5-phosphate synthase.